A 437-amino-acid chain; its full sequence is Adenylosuccinate synthetase, organellar chromatophore (437 aa).

Residues 12-18 (GDEGKGK) and 40-42 (GHT) contribute to the GTP site. Residue Asp13 is the Proton acceptor of the active site. The Mg(2+) site is built by Asp13 and Gly40. IMP is bound by residues 13–16 (DEGK), 38–41 (NAGH), Thr128, Arg142, Gln223, Thr238, and Arg302. His41 functions as the Proton donor in the catalytic mechanism. 298–304 (TTTGRRR) contacts substrate. GTP is bound by residues Arg304 and 330-332 (KLD).

It belongs to the adenylosuccinate synthetase family. In terms of assembly, homodimer. Mg(2+) is required as a cofactor.

It is found in the plastid. The protein resides in the organellar chromatophore. It catalyses the reaction IMP + L-aspartate + GTP = N(6)-(1,2-dicarboxyethyl)-AMP + GDP + phosphate + 2 H(+). It participates in purine metabolism; AMP biosynthesis via de novo pathway; AMP from IMP: step 1/2. Plays an important role in the de novo pathway and in the salvage pathway of purine nucleotide biosynthesis. Catalyzes the first committed step in the biosynthesis of AMP from IMP. This chain is Adenylosuccinate synthetase, organellar chromatophore, found in Paulinella chromatophora.